Consider the following 634-residue polypeptide: Chaperone protein HtpG (634 aa).

The tract at residues 1 to 342 (MSVETQKETL…SNDLSLNVSR (342 aa)) is a; substrate-binding. The b stretch occupies residues 343–559 (EILQKDPVID…EQDLGLQMRQ (217 aa)). Residues 560–634 (ILEASGQKVP…LNKLLVELSA (75 aa)) are c.

This sequence belongs to the heat shock protein 90 family. In terms of assembly, homodimer.

Its subcellular location is the cytoplasm. Molecular chaperone. Has ATPase activity. The chain is Chaperone protein HtpG from Pseudomonas aeruginosa (strain ATCC 15692 / DSM 22644 / CIP 104116 / JCM 14847 / LMG 12228 / 1C / PRS 101 / PAO1).